We begin with the raw amino-acid sequence, 58 residues long: Ribosome modulation factor (58 aa).

This sequence belongs to the ribosome modulation factor family.

The protein localises to the cytoplasm. During stationary phase, converts 70S ribosomes to an inactive dimeric form (100S ribosomes). The polypeptide is Ribosome modulation factor (Shewanella amazonensis (strain ATCC BAA-1098 / SB2B)).